The following is a 356-amino-acid chain: Altered inheritance of mitochondria protein 23, mitochondrial (356 aa).

The transit peptide at 1 to 32 directs the protein to the mitochondrion; sequence MLKVPLSDVLSQKMLFLKSFRYFHCTKYFSRD.

The protein belongs to the AIM23 family.

The protein resides in the mitochondrion. The protein is Altered inheritance of mitochondria protein 23, mitochondrial (AIM23) of Saccharomyces cerevisiae (strain ATCC 204508 / S288c) (Baker's yeast).